The sequence spans 449 residues: Glutamyl-tRNA reductase (449 aa).

Substrate is bound by residues 49–52 (TCNR), Ser-107, 112–114 (EPQ), and Gln-118. Cys-50 functions as the Nucleophile in the catalytic mechanism. Residue 187 to 192 (GAGETI) coordinates NADP(+). A disordered region spans residues 418-449 (QLVERSSEGDDSQQAGADGGAARGDRRAAGGS). Over residues 440-449 (RGDRRAAGGS) the composition is skewed to basic and acidic residues.

Belongs to the glutamyl-tRNA reductase family. In terms of assembly, homodimer.

It carries out the reaction (S)-4-amino-5-oxopentanoate + tRNA(Glu) + NADP(+) = L-glutamyl-tRNA(Glu) + NADPH + H(+). It functions in the pathway porphyrin-containing compound metabolism; protoporphyrin-IX biosynthesis; 5-aminolevulinate from L-glutamyl-tRNA(Glu): step 1/2. Its function is as follows. Catalyzes the NADPH-dependent reduction of glutamyl-tRNA(Glu) to glutamate 1-semialdehyde (GSA). The sequence is that of Glutamyl-tRNA reductase from Halorhodospira halophila (strain DSM 244 / SL1) (Ectothiorhodospira halophila (strain DSM 244 / SL1)).